A 282-amino-acid polypeptide reads, in one-letter code: MTNLSIHNFKLSLVAAVIGSAMVMTSSPVAAQQAMQPMQSMKIERGTILTQPGVFGVFTMFKLRPDWNKVPVAERKGAAEEVKKLIEKHKDNVLVDLYLTRGLETNSDFFFRINAYDLAKAQTFMREFRSTTVGKNADVFETLVGVTKPLNYISKDKSPGLNAGLSSATYSGPAPRYVIVIPVKKNAEWWNMSPEERLKEMEVHTTPTLAYLVNVKRKLYHSTGLDDTDFITYFETDDLTAFNNLMLSLAQVKENKFHVRWGSPTTLGTIHSPEDVIKALAD.

An N-terminal signal peptide occupies residues 1 to 31; it reads MTNLSIHNFKLSLVAAVIGSAMVMTSSPVAA. Residue E104 participates in Ca(2+) binding. H204 is a binding site for heme. R217 functions as the Proton acceptor in the catalytic mechanism. Residues D226 and T265 each contribute to the Ca(2+) site.

Belongs to the chlorite dismutase family. In terms of assembly, homopentamer. Requires heme b as cofactor.

It is found in the periplasm. The catalysed reaction is chloride + O2 = chlorite. Its function is as follows. Catalyzes the heme-dependent decomposition of chlorite to O(2) and chloride with high efficiency and specificity. Used to detoxify chlorite, a by-product of the reduction of perchlorate, a primarily anthropogenic pollutant, in perchlorate-respiring bacteria. This is Chlorite dismutase from Dechloromonas aromatica (strain RCB).